Reading from the N-terminus, the 215-residue chain is Urease accessory protein UreG (215 aa).

24 to 31 provides a ligand contact to GTP; the sequence is GPVGSGKT.

The protein belongs to the SIMIBI class G3E GTPase family. UreG subfamily. Homodimer. UreD, UreF and UreG form a complex that acts as a GTP-hydrolysis-dependent molecular chaperone, activating the urease apoprotein by helping to assemble the nickel containing metallocenter of UreC. The UreE protein probably delivers the nickel.

It localises to the cytoplasm. Functionally, facilitates the functional incorporation of the urease nickel metallocenter. This process requires GTP hydrolysis, probably effectuated by UreG. The protein is Urease accessory protein UreG of Burkholderia ambifaria (strain ATCC BAA-244 / DSM 16087 / CCUG 44356 / LMG 19182 / AMMD) (Burkholderia cepacia (strain AMMD)).